The chain runs to 272 residues: Centromere protein V-like protein 1 (272 aa).

Basic residues predominate over residues 1–17 (MGRVRNRATAQRRRRKR). 2 disordered regions span residues 1–23 (MGRV…DPPA) and 65–95 (RRVR…KDLD). Pro residues predominate over residues 79-90 (APTPDPPGPAPS). Residues 133 to 246 (HTGGCHCGAV…EEVGGGDPGE (114 aa)) enclose the CENP-V/GFA domain. Zn(2+) contacts are provided by Cys137, Cys139, Cys157, Cys159, Cys162, Cys201, and Cys204. The disordered stretch occupies residues 240-272 (GGGDPGEEAAEEHKAIHKTSSQSAPACPREQEQ).

This sequence belongs to the Gfa family. The cofactor is Zn(2+).

This Homo sapiens (Human) protein is Centromere protein V-like protein 1.